We begin with the raw amino-acid sequence, 549 residues long: Nectin-3 (549 aa).

The first 57 residues, 1 to 57 (MARTLRPSPLCPGGGKAQLSSASLLGAGLLLQPPTPPPLLLLLFPLLLFSRLCGALA), serve as a signal peptide directing secretion. The Extracellular segment spans residues 58-404 (GPIIVEPHVT…ATIKDDTIAT (347 aa)). In terms of domain architecture, Ig-like V-type spans 59–165 (PIIVEPHVTA…GNAQSSTTVT (107 aa)). 6 N-linked (GlcNAc...) asparagine glycosylation sites follow: asparagine 73, asparagine 83, asparagine 125, asparagine 186, asparagine 222, and asparagine 331. Cysteines 78 and 148 form a disulfide. 2 Ig-like C2-type domains span residues 170-258 (PTVS…KDIR) and 269-354 (PEVS…KVIY). Disulfide bonds link cysteine 193/cysteine 246 and cysteine 291/cysteine 338. The chain crosses the membrane as a helical span at residues 405 to 425 (IIASVVGGALFIVLVSVLAGI). Topologically, residues 426 to 549 (FCYRRRRTFR…SVISRREWYV (124 aa)) are cytoplasmic.

It belongs to the nectin family. Cis- and trans-homodimer. Can form trans-heterodimers with NECTIN1, NECTIN2, PVR, IGSF4B/Necl-1 and with IGSF4. Interaction between NECTIN1 and NECTIN3 on the pre- and postsynaptic sites, respectively, initiates the formation of puncta adherentia junctions between axons and dendrites. Interacts (via Cytoplasmic domain) with AFDN, providing a connection with the actin cytoskeleton. Binds with low affinity to TIGIT. As to quaternary structure, (Microbial infection) Interacts with C.difficile toxin TcdB, suggesting that it may contribute to TcdB toxin entry into cells. It was however shown that NECTIN3/PVRL3 does not act as a major receptor for TcdB. As to expression, predominantly expressed in testis and placenta as well as in many cell lines, including epithelial cell lines.

The protein localises to the cell membrane. It localises to the postsynaptic cell membrane. The protein resides in the cell junction. Its subcellular location is the adherens junction. Its function is as follows. Cell adhesion molecule that promotes cell-cell adhesion through heterophilic trans-interactions with nectins-like or other nectins, such as trans-interaction with NECTIN2 at Sertoli-spermatid junctions. Trans-interaction with PVR induces activation of CDC42 and RAC small G proteins through common signaling molecules such as SRC and RAP1. Induces endocytosis-mediated down-regulation of PVR from the cell surface, resulting in reduction of cell movement and proliferation. Involved in axon guidance by promoting contacts between the commissural axons and the floor plate cells. Also involved in the formation of cell-cell junctions, including adherens junctions and synapses. Promotes formation of checkerboard-like cellular pattern of hair cells and supporting cells in the auditory epithelium via heterophilic interaction with NECTIN1: NECTIN1 is present in the membrane of hair cells and associates with NECTIN3 on supporting cells, thereby mediating heterotypic adhesion between these two cell types. Plays a role in the morphology of the ciliary body. The polypeptide is Nectin-3 (Homo sapiens (Human)).